Reading from the N-terminus, the 161-residue chain is Nucleotide-binding protein Glov_3198 (161 aa).

Belongs to the YajQ family.

Functionally, nucleotide-binding protein. The sequence is that of Nucleotide-binding protein Glov_3198 from Trichlorobacter lovleyi (strain ATCC BAA-1151 / DSM 17278 / SZ) (Geobacter lovleyi).